Consider the following 256-residue polypeptide: Small ribosomal subunit protein eS1 (256 aa).

Over residues 1–18 (MAVGKNKRLSKGKKGVKK) the composition is skewed to basic residues. A disordered region spans residues 1-21 (MAVGKNKRLSKGKKGVKKRTV). A2 is subject to N-acetylalanine; partial.

The protein belongs to the eukaryotic ribosomal protein eS1 family. Component of the small ribosomal subunit. Mature ribosomes consist of a small (40S) and a large (60S) subunit. The 40S subunit contains about 33 different proteins and 1 molecule of RNA (18S). The 60S subunit contains about 49 different proteins and 3 molecules of RNA (25S, 5.8S and 5S).

It localises to the cytoplasm. The sequence is that of Small ribosomal subunit protein eS1 (rps1) from Aspergillus niger (strain ATCC MYA-4892 / CBS 513.88 / FGSC A1513).